Reading from the N-terminus, the 172-residue chain is C-phycocyanin beta chain (172 aa).

Residue Asn-72 is modified to N4-methylasparagine. (2R,3E)-phycocyanobilin contacts are provided by Cys-82 and Cys-153.

Belongs to the phycobiliprotein family. As to quaternary structure, heterodimer of an alpha and a beta subunit, which further assembles into trimers and the trimers into hexamers. The basic functional unit of phycobiliproteins is a ring-shaped hexamer formed from two back-to-back trimers contacting via the alpha chain subunits. The trimers are composed of alpha/beta subunit heterodimers arranged around a three-fold axis of symmetry. The phycoerythrins also contain a gamma subunit which is located in the center of the hexamer. In terms of processing, contains two covalently linked bilin chromophores.

Its subcellular location is the plastid. The protein localises to the chloroplast thylakoid membrane. Its function is as follows. Light-harvesting photosynthetic bile pigment-protein from the phycobiliprotein complex (phycobilisome, PBS). Phycocyanin is the major phycobiliprotein in the PBS rod. The chain is C-phycocyanin beta chain (cpcB) from Pyropia haitanensis (Red seaweed).